Consider the following 337-residue polypeptide: Casein kinase I isoform alpha-like (337 aa).

At K8 the chain carries N6-acetyllysine. One can recognise a Protein kinase domain in the interval Y17–F285. ATP contacts are provided by residues I23–V31 and K46. D136 acts as the Proton acceptor in catalysis. Over residues A309–K325 the composition is skewed to low complexity. A disordered region spans residues A309 to N337. Positions Q326–N337 are enriched in basic and acidic residues.

Belongs to the protein kinase superfamily. CK1 Ser/Thr protein kinase family. Casein kinase I subfamily. In terms of assembly, interacts with FAM83A, FAM83B, FAM83C, FAM83D, FAM83E, FAM83F, FAM83G and FAM83H (via DUF1669).

It localises to the cytoplasm. The catalysed reaction is L-seryl-[protein] + ATP = O-phospho-L-seryl-[protein] + ADP + H(+). It carries out the reaction L-threonyl-[protein] + ATP = O-phospho-L-threonyl-[protein] + ADP + H(+). Casein kinases are operationally defined by their preferential utilization of acidic proteins such as caseins as substrates. It can phosphorylate a large number of proteins. Participates in Wnt signaling. The protein is Casein kinase I isoform alpha-like (CSNK1A1L) of Homo sapiens (Human).